Consider the following 114-residue polypeptide: Thioredoxin H1 (114 aa).

An N-acetylalanine modification is found at A2. Residues 2 to 114 form the Thioredoxin domain; that stretch reads ASEEGQVIAC…LQSTIAKHLA (113 aa). Catalysis depends on nucleophile residues C40 and C43. A disulfide bridge connects residues C40 and C43.

The protein belongs to the thioredoxin family. Plant H-type subfamily. As to quaternary structure, interacts with FBA6. Interacts with MDH1.

The protein resides in the cytoplasm. In terms of biological role, thiol-disulfide oxidoreductase involved in the redox regulation of a number of cytosolic enzymes. Activates the cytosolic malate dehydrogenase (MDH) probably by reducing an interchain disulfide bond of the inactive MDH homodimer. Possesses insulin disulfide bonds reducing activity. The polypeptide is Thioredoxin H1 (TRX1) (Arabidopsis thaliana (Mouse-ear cress)).